Consider the following 270-residue polypeptide: L-fucose dehydrogenase (270 aa).

Residues R19, I21, D40, K41, D62, V63, N89, Y154, K158, I187, T189, and L191 each contribute to the NAD(+) site. Y154 functions as the Proton acceptor in the catalytic mechanism.

It belongs to the short-chain dehydrogenases/reductases (SDR) family. In terms of assembly, homotetramer. Highly expressed in brain, placenta, liver and kidney.

The protein localises to the cytoplasm. The catalysed reaction is L-fucose + NAD(+) = L-fucono-1,5-lactone + NADH + H(+). It catalyses the reaction D-arabinose + NAD(+) = D-arabinono-1,5-lactone + NADH + H(+). It carries out the reaction L-galactose + NAD(+) = L-galactono-1,5-lactone + NADH + H(+). It participates in carbohydrate degradation; L-fucose degradation. Its function is as follows. Catalyzes the NAD(+)-dependent oxidation of L-fucose, yielding L-fucono-1,5-lactone, which rapidly converts spontaneously to L-fucone-1,4-lactone. Can also act on D-arabinose and L-galactose, with lower catalytic efficiency. Does not use NADPH. May be the initial enzyme of the L-fucose degradation pathway in mammals. The protein is L-fucose dehydrogenase of Homo sapiens (Human).